The following is a 78-amino-acid chain: Large ribosomal subunit protein bL28 (78 aa).

Residues 1-28 (MSAYCQVTGRKPGFGKQVSHSHRHTSRR) are disordered.

It belongs to the bacterial ribosomal protein bL28 family.

This chain is Large ribosomal subunit protein bL28, found in Corynebacterium urealyticum (strain ATCC 43042 / DSM 7109).